A 239-amino-acid polypeptide reads, in one-letter code: Lactate utilization protein A (239 aa).

This sequence belongs to the LutA/YkgE family.

Is involved in L-lactate degradation and allows cells to grow with lactate as the sole carbon source. The polypeptide is Lactate utilization protein A (Bacillus cytotoxicus (strain DSM 22905 / CIP 110041 / 391-98 / NVH 391-98)).